The following is a 344-amino-acid chain: MPMQGAQRKLLGSLNSTPTATSNPGLAANHTGAPCLEVSIPDGLFLSLGLVSLVENVLVVAAIAKNRNLHSSMYYFICCLALSDLLVSGSNMLETAIILLLEAGTLATRASVVQQLHNTIDVLTCSSMLCSLCFLGAIAVDRYISIFYALRYHSIMTLPRAQRAIAAIWVASVLSSTLFITYYDHAAVLLCLVVFFLAMLVLMAVLYVHMLARACQHAQGIIRLHNRQLPAHKGFGLRGAATLTILLGIFFLCWGPFFLHLTLVVFCPQHLTCNCIFKNFKVFLTLIICNTIIDPLIYAFRSQELRRTLKEVLLCSSWPGCWAEGGGDSVWPGSCVTLRGPLPP.

Residues Met1–Glu37 are Extracellular-facing. N-linked (GlcNAc...) asparagine glycosylation occurs at Asn29. The chain crosses the membrane as a helical span at residues Val38–Ile63. The Cytoplasmic segment spans residues Ala64–Ser72. Residues Met73–Leu93 form a helical membrane-spanning segment. Residues Glu94–Asn118 lie on the Extracellular side of the membrane. A helical membrane pass occupies residues Thr119–Val140. Residues Asp141–Arg163 are Cytoplasmic-facing. Residues Ala164–Tyr183 form a helical membrane-spanning segment. The Extracellular portion of the chain corresponds to Asp184 to Cys191. A helical transmembrane segment spans residues Leu192–Leu211. The Cytoplasmic portion of the chain corresponds to Ala212–Ala240. A helical membrane pass occupies residues Ala241–Phe266. At Cys267–Asn279 the chain is on the extracellular side. A helical transmembrane segment spans residues Phe280 to Phe300. The Cytoplasmic portion of the chain corresponds to Arg301–Pro344. Cys315 carries the S-palmitoyl cysteine lipid modification.

It belongs to the G-protein coupled receptor 1 family. As to quaternary structure, interacts with MGRN1, but does not undergo MGRN1-mediated ubiquitination; this interaction competes with GNAS-binding and thus inhibits agonist-induced cAMP production. Interacts with OPN3; the interaction results in a decrease in MC1R-mediated cAMP signaling and ultimately a decrease in melanin production in melanocytes.

It localises to the cell membrane. Receptor for MSH (alpha, beta and gamma) and ACTH. The activity of this receptor is mediated by G proteins which activate adenylate cyclase. Mediates melanogenesis, the production of eumelanin (black/brown) and phaeomelanin (red/yellow), via regulation of cAMP signaling in melanocytes. This chain is Melanocyte-stimulating hormone receptor (MC1R), found in Callithrix jacchus (White-tufted-ear marmoset).